The primary structure comprises 246 residues: Probable transcriptional regulatory protein Rmag_0394 (246 aa).

This sequence belongs to the TACO1 family.

It is found in the cytoplasm. This is Probable transcriptional regulatory protein Rmag_0394 from Ruthia magnifica subsp. Calyptogena magnifica.